Here is a 453-residue protein sequence, read N- to C-terminus: MKEKQFWNRILEFAQERLTRSMYDFYAIQAELIKVEENVATIFLPRSEMEMVWEKQLKDIIVVAGFEIYDAEITPHYIFTKPQDTTSSQVEEATNLTLYDYSPKLVSIPYSDTGLKEKYTFDNFIQGDGNVWAVSAALAVSEDLALTYNPLFIYGGPGLGKTHLLNAIGNEILKNIPNARVKYIPAESFINDFLDHLRLGEMEKFKKTYRSLDLLLIDDIQSLSGKKVATQEEFFNTFNALHDKQKQIVLTSDRSPKHLEGLEERLVTRFSWGLTQTITPPDFETRIAILQSKTEHLGYNFQSDTLEYLAGQFDSNVRDLEGAINDITLIARVKKIKDITIDIAAEAIRARKQDVSQMLVIPIDKIQTEVGNFYGVSIKEMKGSRRLQNIVLARQVAMYLSRELTDNSLPKIGKEFGGKDHTTVIHAHAKIKSLIDQDDNLRLEIESIKKKIK.

The domain I, interacts with DnaA modulators stretch occupies residues 1 to 74 (MKEKQFWNRI…GFEIYDAEIT (74 aa)). Residues 74-113 (TPHYIFTKPQDTTSSQVEEATNLTLYDYSPKLVSIPYSDT) form a domain II region. The interval 114–331 (GLKEKYTFDN…GAINDITLIA (218 aa)) is domain III, AAA+ region. Residues Gly158, Gly160, Lys161, and Thr162 each contribute to the ATP site. The interval 332 to 453 (RVKKIKDITI…EIESIKKKIK (122 aa)) is domain IV, binds dsDNA.

This sequence belongs to the DnaA family. Oligomerizes as a right-handed, spiral filament on DNA at oriC. Interacts (via domains I and III) with CcrZ.

The protein localises to the cytoplasm. With respect to regulation, ccrZ stimulates DnaA, possibly by phosphorylation of an intermediate molecule, to initiate DNA replication. In terms of biological role, plays an essential role in the initiation and regulation of chromosomal replication. ATP-DnaA binds to the origin of replication (oriC) to initiate formation of the DNA replication initiation complex once per cell cycle. Binds the DnaA box (a 9 base pair repeat at the origin) and separates the double-stranded (ds)DNA. Forms a right-handed helical filament on oriC DNA; dsDNA binds to the exterior of the filament while single-stranded (ss)DNA is stabiized in the filament's interior. The ATP-DnaA-oriC complex binds and stabilizes one strand of the AT-rich DNA unwinding element (DUE), permitting loading of DNA polymerase. After initiation quickly degrades to an ADP-DnaA complex that is not apt for DNA replication. Binds acidic phospholipids. Mutations in this gene suppress a deletion of cell cycle regulator ccrZ. This chain is Chromosomal replication initiator protein DnaA, found in Streptococcus pneumoniae serotype 2 (strain D39 / NCTC 7466).